The primary structure comprises 58 residues: U7-ctenitoxin-Pr1a (58 aa).

Cystine bridges form between Cys2/Cys16, Cys9/Cys22, Cys13/Cys48, Cys15/Cys40, Cys18/Cys55, and Cys24/Cys38.

As to expression, expressed by the venom gland.

The protein resides in the secreted. Its function is as follows. Probable neurotoxin. This Phoneutria reidyi (Brazilian Amazonian armed spider) protein is U7-ctenitoxin-Pr1a.